We begin with the raw amino-acid sequence, 436 residues long: GTPase Der (436 aa).

EngA-type G domains lie at 4-167 (PVIA…PKIE) and 176-351 (IRFS…ESHS). GTP contacts are provided by residues 10–17 (GRPNVGKS), 57–61 (DTGGI), 119–122 (NKVD), 182–189 (GRPNVGKS), 229–233 (DTAGM), and 294–297 (NKWD). Residues 352 to 436 (IRIQTNVLND…PIHIIARARD (85 aa)) enclose the KH-like domain.

It belongs to the TRAFAC class TrmE-Era-EngA-EngB-Septin-like GTPase superfamily. EngA (Der) GTPase family. In terms of assembly, associates with the 50S ribosomal subunit.

Its function is as follows. GTPase that plays an essential role in the late steps of ribosome biogenesis. In Bacillus anthracis (strain A0248), this protein is GTPase Der.